The following is a 471-amino-acid chain: uncharacterized protein (471 aa).

Transmembrane regions (helical) follow at residues 48 to 68 (FISA…FTIV), 85 to 105 (LSGV…YPML), 123 to 140 (YTMS…YALA), 145 to 165 (SVAL…MFLY), 186 to 206 (VVNS…GGLM), 223 to 243 (SGNW…FACF), 277 to 297 (FVGC…YFLL), 320 to 340 (GNFL…FSYL), 349 to 369 (IILL…TIHY), 379 to 399 (FIIY…SVSL), 414 to 434 (VAVQ…GGAF), and 440 to 460 (VVFF…LLII).

Belongs to the major facilitator superfamily.

It is found in the golgi apparatus. Its subcellular location is the membrane. This is an uncharacterized protein from Schizosaccharomyces pombe (strain 972 / ATCC 24843) (Fission yeast).